The chain runs to 937 residues: Beta-mannosidase A (937 aa).

The signal sequence occupies residues 1-23; it reads MRALPTTATTLLGVLFFPSASRS. 7 N-linked (GlcNAc...) asparagine glycosylation sites follow: N42, N82, N250, N285, N319, N329, and N350. The active-site Proton donor is the E482. 4 N-linked (GlcNAc...) asparagine glycosylation sites follow: N553, N612, N743, and N796.

It belongs to the glycosyl hydrolase 2 family. Beta-mannosidase A subfamily. As to quaternary structure, homodimer. Post-translationally, N-glycosylated.

Its subcellular location is the secreted. The catalysed reaction is Hydrolysis of terminal, non-reducing beta-D-mannose residues in beta-D-mannosides.. Its pathway is glycan metabolism; N-glycan degradation. Exoglycosidase that cleaves the single beta-linked mannose residue from the non-reducing end of beta-mannosidic oligosaccharides of various complexity and length. Involved in the degradation of polymeric mannan and galactomannan. Releases the terminal mannose residue from mannotriose and is somewaht less active on other mannooligosaccharides. This Aspergillus aculeatus protein is Beta-mannosidase A (mndA).